A 429-amino-acid chain; its full sequence is Ribosomal RNA small subunit methyltransferase B (429 aa).

Residues 254 to 260 (CAAPGGK), aspartate 277, aspartate 303, and aspartate 322 contribute to the S-adenosyl-L-methionine site. The Nucleophile role is filled by cysteine 375.

Belongs to the class I-like SAM-binding methyltransferase superfamily. RsmB/NOP family.

It is found in the cytoplasm. It catalyses the reaction cytidine(967) in 16S rRNA + S-adenosyl-L-methionine = 5-methylcytidine(967) in 16S rRNA + S-adenosyl-L-homocysteine + H(+). Its function is as follows. Specifically methylates the cytosine at position 967 (m5C967) of 16S rRNA. This Shigella boydii serotype 18 (strain CDC 3083-94 / BS512) protein is Ribosomal RNA small subunit methyltransferase B.